A 229-amino-acid polypeptide reads, in one-letter code: Large ribosomal subunit protein uL1 (229 aa).

It belongs to the universal ribosomal protein uL1 family. Part of the 50S ribosomal subunit.

Its function is as follows. Binds directly to 23S rRNA. The L1 stalk is quite mobile in the ribosome, and is involved in E site tRNA release. Protein L1 is also a translational repressor protein, it controls the translation of the L11 operon by binding to its mRNA. In Streptococcus suis (strain 98HAH33), this protein is Large ribosomal subunit protein uL1.